Consider the following 383-residue polypeptide: MTASSPSLSPTLELACELIRRPSVTPVDADCQALMMRRLEAAGFALEPMRIEEVDNFWARRGGDGPVLCFAGHTDVVPTGPVQAWQHQPFDALIDEQGMLCGRGAADMKGSLASMIVAVERFVADHPGHKGAIAFLITSDEEGPAHHGTKAVVERLAARGERLDWCIVGEPSSTSLVGDVVKNGRRGSLGARLTIRGVQGHVAYPHLAKNPIHLAAPALAELAAEHWDDGNAFFPPTSFQISNLNSGTGATNVIPGELSALFNFRFSTESTVEGLQKRVEAILDKHGLDWHVEWALSGLPFLTEPGELLDAVAASIKAVTGRETRPSTSGGTSDGRFIATMGTQVVELGPVNATIHQVNERVLASDLELLTEIYYQTLVRLLA.

Position 73 (His-73) interacts with Zn(2+). Residue Asp-75 is part of the active site. Asp-107 serves as a coordination point for Zn(2+). The active-site Proton acceptor is Glu-141. The Zn(2+) site is built by Glu-142, Glu-170, and His-356.

The protein belongs to the peptidase M20A family. DapE subfamily. Homodimer. Zn(2+) is required as a cofactor. It depends on Co(2+) as a cofactor.

The catalysed reaction is N-succinyl-(2S,6S)-2,6-diaminopimelate + H2O = (2S,6S)-2,6-diaminopimelate + succinate. Its pathway is amino-acid biosynthesis; L-lysine biosynthesis via DAP pathway; LL-2,6-diaminopimelate from (S)-tetrahydrodipicolinate (succinylase route): step 3/3. Its function is as follows. Catalyzes the hydrolysis of N-succinyl-L,L-diaminopimelic acid (SDAP), forming succinate and LL-2,6-diaminopimelate (DAP), an intermediate involved in the bacterial biosynthesis of lysine and meso-diaminopimelic acid, an essential component of bacterial cell walls. This chain is Succinyl-diaminopimelate desuccinylase, found in Pseudomonas paraeruginosa (strain DSM 24068 / PA7) (Pseudomonas aeruginosa (strain PA7)).